The following is a 115-amino-acid chain: UPF0212 protein MJ0068 (115 aa).

This sequence belongs to the UPF0212 family.

This chain is UPF0212 protein MJ0068, found in Methanocaldococcus jannaschii (strain ATCC 43067 / DSM 2661 / JAL-1 / JCM 10045 / NBRC 100440) (Methanococcus jannaschii).